The primary structure comprises 248 residues: Triosephosphate isomerase (248 aa).

Asn9 to Lys11 provides a ligand contact to substrate. The Electrophile role is filled by His95. The active-site Proton acceptor is the Glu166. Residues Gly172, Ser210, and Gly231 to Gly232 each bind substrate.

It belongs to the triosephosphate isomerase family. In terms of assembly, homodimer.

Its subcellular location is the cytoplasm. It carries out the reaction D-glyceraldehyde 3-phosphate = dihydroxyacetone phosphate. It participates in carbohydrate biosynthesis; gluconeogenesis. The protein operates within carbohydrate degradation; glycolysis; D-glyceraldehyde 3-phosphate from glycerone phosphate: step 1/1. Functionally, involved in the gluconeogenesis. Catalyzes stereospecifically the conversion of dihydroxyacetone phosphate (DHAP) to D-glyceraldehyde-3-phosphate (G3P). In Delftia acidovorans (strain DSM 14801 / SPH-1), this protein is Triosephosphate isomerase.